The primary structure comprises 2254 residues: Genome polyprotein (2254 aa).

Residues 438–592 (QTTINELAQL…EQWLVDNPGR (155 aa)) enclose the SF3 helicase domain. 464–471 (GPPGIGKT) is a binding site for ATP. Tyrosine 956 carries the O-(5'-phospho-RNA)-tyrosine modification. The Peptidase C24 domain maps to 1041–1196 (GDTYDSEGRG…KKLVSRVQTK (156 aa)). Active-site for 3CLpro activity residues include histidine 1078, aspartate 1099, and cysteine 1163. The RdRp catalytic domain maps to 1434-1559 (RVLYCLDYSK…GLTPATASIM (126 aa)). Positions 1714-1742 (PAPTRSVASNPEGTQNSNESRPVQPAGPM) are disordered. Residues 1719–1734 (SVASNPEGTQNSNESR) show a composition bias toward polar residues.

As to quaternary structure, homodimer. Homomultimer. In terms of assembly, interacts with host IEF4E; this interaction plays a role in translation of viral proteins. Post-translationally, specific enzymatic cleavages in vivo yield mature proteins. Pro-Pol is first autocatalytically cleaved, then processes the whole polyprotein. VPg is uridylylated by the polymerase and is covalently attached to the 5'-end of the polyadenylated genomic and subgenomic RNAs. This uridylylated form acts as a nucleotide-peptide primer for the polymerase.

The protein localises to the virion. Its subcellular location is the host cytoplasm. It catalyses the reaction a ribonucleoside 5'-triphosphate + H2O = a ribonucleoside 5'-diphosphate + phosphate + H(+). The catalysed reaction is RNA(n) + a ribonucleoside 5'-triphosphate = RNA(n+1) + diphosphate. The enzyme catalyses Endopeptidase with a preference for cleavage when the P1 position is occupied by Glu-|-Xaa and the P1' position is occupied by Gly-|-Yaa.. Functionally, together with NTPase and NS4, initiates the formation of the replication complex. Induces the proliferation of the host smooth ER membranes forming long tubular structures. These remodeled membranes probably form the viral factories that contain the replication complex. Displays NTPase activity, but no helicase activity. Induces the formation of convoluted membranes derived from the host ER. These remodeled membranes probably form the viral factories that contain the replication complex. Together with NS2 and NS4, initiates the formation of the replication complex. In terms of biological role, probable key protein responsible for the formation of membrane alterations by the virus. Induces the formation of convoluted membranes derived from the host ER. These remodeled membranes probably form the viral factories that contain the replication complex. Together with NS2 and NTPase, initiates the formation of the replication complex. Its function is as follows. Viral genome-linked protein is covalently linked to the 5'-end of the positive-strand, negative-strand genomic RNAs and subgenomic RNA. Acts as a genome-linked replication primer. May recruit ribosome to viral RNA thereby promoting viral proteins translation. Interacts with host translation initiation complex to allow the translation of viral proteins. Functionally, protease-polymerase p76 processes the polyprotein: Pro-Pol is first released by autocleavage, then all other proteins are cleaved. Cleaves host translation initiation factor eIF4G1, eIF4G2 and PABP1 thereby inducing a shutdown of host protein synthesis. This shutdown may not prevent viral mRNA from being translated since viral Vpg replaces the cap. It is also an RNA-directed RNA polymerase which replicates genomic and antigenomic viral RNA by recognizing specific signals. Also transcribes a subgenomic mRNA by initiating RNA synthesis internally on antigenomic RNA. This sgRNA codes for structural proteins. Catalyzes the covalent attachment VPg with viral RNAs. Capsid protein self assembles to form an icosahedral capsid with a T=3 symmetry, about 38 nm in diameter, and consisting of 180 capsid proteins. The capsid encapsulate the genomic RNA and VP2 proteins. Attaches virion to target cells, inducing endocytosis of the viral particle. Acidification of the endosome induces conformational change of capsid protein thereby injecting virus genomic RNA into host cytoplasm. The chain is Genome polyprotein from Porcine enteric sapovirus (isolate Swine/United States/Cowden/1980) (Sw/SV/Cowden/1980/US).